The following is a 592-amino-acid chain: V-type ATP synthase alpha chain (592 aa).

233–240 (GPFGSGKT) contacts ATP.

This sequence belongs to the ATPase alpha/beta chains family.

It catalyses the reaction ATP + H2O + 4 H(+)(in) = ADP + phosphate + 5 H(+)(out). In terms of biological role, produces ATP from ADP in the presence of a proton gradient across the membrane. The V-type alpha chain is a catalytic subunit. The polypeptide is V-type ATP synthase alpha chain (Clostridium botulinum (strain Okra / Type B1)).